The chain runs to 182 residues: uncharacterized protein (182 aa).

Helical transmembrane passes span L19–S39, I51–I71, I87–F107, and C118–C138.

It localises to the membrane. This is an uncharacterized protein from Caenorhabditis elegans.